A 521-amino-acid polypeptide reads, in one-letter code: D-aminoacyl-tRNA deacylase (521 aa).

Disordered regions lie at residues 323–353 (AVGTVHTKDSTDIDTGTNHNVDAERTESEDS) and 499–521 (VFSTSSSSSSSSSSSSSSSSSSS). The span at 343 to 353 (VDAERTESEDS) shows a compositional bias: basic and acidic residues. Low complexity predominate over residues 501-521 (STSSSSSSSSSSSSSSSSSSS).

The protein belongs to the DtdA deacylase family. As to quaternary structure, monomer. The cofactor is Zn(2+).

The enzyme catalyses a D-aminoacyl-tRNA + H2O = a tRNA + a D-alpha-amino acid + H(+). It carries out the reaction glycyl-tRNA(Ala) + H2O = tRNA(Ala) + glycine + H(+). Its function is as follows. D-aminoacyl-tRNA deacylase with broad substrate specificity. By recycling D-aminoacyl-tRNA to D-amino acids and free tRNA molecules, this enzyme counteracts the toxicity associated with the formation of D-aminoacyl-tRNA entities in vivo. The protein is D-aminoacyl-tRNA deacylase of Haloquadratum walsbyi (strain DSM 16790 / HBSQ001).